A 110-amino-acid polypeptide reads, in one-letter code: UPF0132 membrane protein MJ1443 (110 aa).

3 helical membrane passes run 15-35, 49-69, and 70-90; these read IEGA…YILE, IILF…PYGW, and MLSG…MYKA.

It belongs to the UPF0132 family.

It localises to the cell membrane. This chain is UPF0132 membrane protein MJ1443, found in Methanocaldococcus jannaschii (strain ATCC 43067 / DSM 2661 / JAL-1 / JCM 10045 / NBRC 100440) (Methanococcus jannaschii).